We begin with the raw amino-acid sequence, 509 residues long: Putative aldehyde dehydrogenase family 7 member A1 homolog (509 aa).

244 to 249 (GSTEVG) is an NAD(+) binding site. E266 serves as the catalytic Proton acceptor. The active-site Nucleophile is C300.

This sequence belongs to the aldehyde dehydrogenase family. In terms of assembly, homotetramer.

It catalyses the reaction an aldehyde + NAD(+) + H2O = a carboxylate + NADH + 2 H(+). The sequence is that of Putative aldehyde dehydrogenase family 7 member A1 homolog from Dictyostelium discoideum (Social amoeba).